The chain runs to 2153 residues: Non-reducing polyketide synthase albA (2153 aa).

Residues 8 to 244 (YLFGDQTSDI…VKAPIHGPYH (237 aa)) are N-terminal acylcarrier protein transacylase domain (SAT). One can recognise a Ketosynthase family 3 (KS3) domain in the interval 375–806 (NSKIAIIGMS…GGNTALLLED (432 aa)). Catalysis depends on for beta-ketoacyl synthase activity residues cysteine 547, histidine 682, and histidine 724. Residues 912 to 1232 (FVFTGQGAQY…LASLHLAGID (321 aa)) form a malonyl-CoA:ACP transacylase (MAT) domain region. Residue serine 1001 is the For acyl/malonyl transferase activity of the active site. The segment at 1286-1425 (HEYLTTAAQK…CTVRFFDCAA (140 aa)) is N-terminal hotdog fold. Positions 1286–1598 (HEYLTTAAQK…FQALSRKILD (313 aa)) constitute a PKS/mFAS DH domain. Positions 1290-1603 (TTAAQKVIET…RKILDTVLPP (314 aa)) are product template (PT) domain. Histidine 1326 acts as the Proton acceptor; for dehydratase activity in catalysis. A C-terminal hotdog fold region spans residues 1452-1598 (DAHRLGRGMV…FQALSRKILD (147 aa)). Aspartate 1511 functions as the Proton donor; for dehydratase activity in the catalytic mechanism. Residues 1608–1643 (KGPARPAASAQKAAPAAAASKSRASAPAPAKPAAKP) form a disordered region. Positions 1610 to 1643 (PARPAASAQKAAPAAAASKSRASAPAPAKPAAKP) are enriched in low complexity. Residues 1643–1720 (PSAPSLVKRA…DFKQFLAPMS (78 aa)) enclose the Carrier 1 domain. Position 1680 is an O-(pantetheine 4'-phosphoryl)serine (serine 1680). The segment at 1720 to 1765 (SQGEASDGSTSDPESSSSFNGGSSTDESSAGSPVSSPPNEKVTQVE) is disordered. Over residues 1725–1748 (SDGSTSDPESSSSFNGGSSTDESS) the composition is skewed to low complexity. The span at 1749–1765 (AGSPVSSPPNEKVTQVE) shows a compositional bias: polar residues. In terms of domain architecture, Carrier 2 spans 1764-1841 (VEQHATIKEI…DVEDALGLKP (78 aa)). O-(pantetheine 4'-phosphoryl)serine is present on serine 1801. The segment at 1879–2151 (SPHPRSTSIL…ELGSFIGNAM (273 aa)) is claisen cyclase domain. The active-site For Claisen cyclase activity is the serine 1969.

The enzyme catalyses 6 malonyl-CoA + acetyl-CoA + 6 H(+) = naphtopyrone YWA1 + 6 CO2 + 7 CoA + H2O. The protein operates within secondary metabolite biosynthesis. Non-reducing polyketide synthase; part of the gene cluster that mediates the biosynthesis of aurasperone B, a dimeric gamma-naphthopyrone. The first step in the biosynthesis of aurasperone B is the production of gamma-naphthopyrone precursor YWA1 by the non-reducing polyketide synthase albA, via condensation of one acetyl-CoA starter unit with 6 malonyl-CoA units. YWA1 is then methylated by aunE at position C-6 to yield foncesin which is further methylated at position C-8 by aunD to produce fonsecin B. A key enzyme in the biosynthetic pathway is the cytochrome P450 monooxygenase aunB which catalyzes the oxidative dimerization of fonsecin B to aurasperone B. AunB also catalyzes the oxidative dimerization of rubrofusarin B into aurasperone A. This chain is Non-reducing polyketide synthase albA, found in Aspergillus niger (strain ATCC MYA-4892 / CBS 513.88 / FGSC A1513).